Reading from the N-terminus, the 125-residue chain is Large ribosomal subunit protein bL17 (125 aa).

Belongs to the bacterial ribosomal protein bL17 family. As to quaternary structure, part of the 50S ribosomal subunit. Contacts protein L32.

The protein is Large ribosomal subunit protein bL17 of Acinetobacter baylyi (strain ATCC 33305 / BD413 / ADP1).